The chain runs to 322 residues: Malate dehydrogenase (322 aa).

Residues 10 to 15 (GSGQIG) and aspartate 34 contribute to the NAD(+) site. 2 residues coordinate substrate: arginine 83 and arginine 89. Residues asparagine 96 and 119 to 121 (ITN) contribute to the NAD(+) site. 2 residues coordinate substrate: asparagine 121 and arginine 152. The active-site Proton acceptor is the histidine 176.

This sequence belongs to the LDH/MDH superfamily. MDH type 3 family.

The catalysed reaction is (S)-malate + NAD(+) = oxaloacetate + NADH + H(+). Catalyzes the reversible oxidation of malate to oxaloacetate. The sequence is that of Malate dehydrogenase from Nitrobacter hamburgensis (strain DSM 10229 / NCIMB 13809 / X14).